The chain runs to 536 residues: ATP synthase subunit alpha, mitochondrial (536 aa).

The transit peptide at 1-27 directs the protein to the mitochondrion; it reads MLRQAGTRLLKVPVCGLRPSITLKRGY. Residue 197–204 coordinates ATP; sequence GDRQTGKT.

It belongs to the ATPase alpha/beta chains family. In terms of assembly, F-type ATPases have 2 components, CF(1) - the catalytic core - and CF(0) - the membrane proton channel. CF(1) has five subunits: alpha(3), beta(3), gamma(1), delta(1), epsilon(1). CF(0) has three main subunits: a, b and c.

It localises to the mitochondrion. The protein localises to the mitochondrion inner membrane. Functionally, mitochondrial membrane ATP synthase (F(1)F(0) ATP synthase or Complex V) produces ATP from ADP in the presence of a proton gradient across the membrane which is generated by electron transport complexes of the respiratory chain. F-type ATPases consist of two structural domains, F(1) - containing the extramembraneous catalytic core, and F(0) - containing the membrane proton channel, linked together by a central stalk and a peripheral stalk. During catalysis, ATP synthesis in the catalytic domain of F(1) is coupled via a rotary mechanism of the central stalk subunits to proton translocation. Subunits alpha and beta form the catalytic core in F(1). Rotation of the central stalk against the surrounding alpha(3)beta(3) subunits leads to hydrolysis of ATP in three separate catalytic sites on the beta subunits. Subunit alpha does not bear the catalytic high-affinity ATP-binding sites. This is ATP synthase subunit alpha, mitochondrial (atp1) from Schizosaccharomyces pombe (strain 972 / ATCC 24843) (Fission yeast).